The following is a 480-amino-acid chain: Proline--tRNA ligase (480 aa).

It belongs to the class-II aminoacyl-tRNA synthetase family. ProS type 3 subfamily. As to quaternary structure, homodimer.

The protein localises to the cytoplasm. The enzyme catalyses tRNA(Pro) + L-proline + ATP = L-prolyl-tRNA(Pro) + AMP + diphosphate. Functionally, catalyzes the attachment of proline to tRNA(Pro) in a two-step reaction: proline is first activated by ATP to form Pro-AMP and then transferred to the acceptor end of tRNA(Pro). The chain is Proline--tRNA ligase from Alkaliphilus oremlandii (strain OhILAs) (Clostridium oremlandii (strain OhILAs)).